Here is a 316-residue protein sequence, read N- to C-terminus: Ornithine carbamoyltransferase (316 aa).

Carbamoyl phosphate is bound by residues 57–60, Gln84, Arg108, and 135–138; these read STRT and HPCQ. L-ornithine contacts are provided by residues Asn166, Asp230, and 234–235; that span reads SM. Carbamoyl phosphate is bound by residues 269 to 270 and Arg297; that span reads CL.

The protein belongs to the aspartate/ornithine carbamoyltransferase superfamily. OTCase family.

It is found in the cytoplasm. The catalysed reaction is carbamoyl phosphate + L-ornithine = L-citrulline + phosphate + H(+). It functions in the pathway amino-acid degradation; L-arginine degradation via ADI pathway; carbamoyl phosphate from L-arginine: step 2/2. Its function is as follows. Reversibly catalyzes the transfer of the carbamoyl group from carbamoyl phosphate (CP) to the N(epsilon) atom of ornithine (ORN) to produce L-citrulline. This Bacillus anthracis (strain CDC 684 / NRRL 3495) protein is Ornithine carbamoyltransferase.